Here is a 424-residue protein sequence, read N- to C-terminus: Serine--tRNA ligase (424 aa).

231–233 (TAE) is an L-serine binding site. ATP is bound by residues 262-264 (RRE) and Val278. L-serine is bound at residue Glu285. 349–352 (EVSS) contacts ATP. Residue Ser384 participates in L-serine binding.

Belongs to the class-II aminoacyl-tRNA synthetase family. Type-1 seryl-tRNA synthetase subfamily. In terms of assembly, homodimer. The tRNA molecule binds across the dimer.

It localises to the cytoplasm. It carries out the reaction tRNA(Ser) + L-serine + ATP = L-seryl-tRNA(Ser) + AMP + diphosphate + H(+). The catalysed reaction is tRNA(Sec) + L-serine + ATP = L-seryl-tRNA(Sec) + AMP + diphosphate + H(+). It functions in the pathway aminoacyl-tRNA biosynthesis; selenocysteinyl-tRNA(Sec) biosynthesis; L-seryl-tRNA(Sec) from L-serine and tRNA(Sec): step 1/1. Catalyzes the attachment of serine to tRNA(Ser). Is also able to aminoacylate tRNA(Sec) with serine, to form the misacylated tRNA L-seryl-tRNA(Sec), which will be further converted into selenocysteinyl-tRNA(Sec). This is Serine--tRNA ligase from Chlamydia abortus (strain DSM 27085 / S26/3) (Chlamydophila abortus).